Reading from the N-terminus, the 842-residue chain is Netrin receptor UNC5A (842 aa).

An N-terminal signal peptide occupies residues 1–25 (MAVRPGLWPALLGIVLAAWLRGSGA). The Extracellular portion of the chain corresponds to 26-306 (QQSATVANPV…ASGPEDVALY (281 aa)). An Ig-like domain is found at 44-141 (PHFLVEPEDV…SGTTKSQKAY (98 aa)). Intrachain disulfides connect Cys65/Cys126, Cys77/Cys124, and Cys170/Cys221. Asn107 and Asn218 each carry an N-linked (GlcNAc...) asparagine glycan. One can recognise an Ig-like C2-type domain in the interval 155–234 (PLAKEVSLEQ…NIVARRRSAS (80 aa)). The TSP type-1 domain maps to 242 to 294 (DGSWSPWSKWSACGLDCTHWRSRECSDPAPRNGGEECQGTDLDTRNCTSDLCV). Residues Trp245, Trp248, and Trp251 are each glycosylated (C-linked (Man) tryptophan). Intrachain disulfides connect Cys254–Cys288, Cys258–Cys293, and Cys266–Cys278. The N-linked (GlcNAc...) asparagine glycan is linked to Asn287. The helical transmembrane segment at 307–327 (VGLIAVAVCLVLLLLVLILVY) threads the bilayer. Residues 328–842 (CRKKEGLDSD…GLFTVSEAEC (515 aa)) are Cytoplasmic-facing. The region spanning 441 to 584 (NMTYGTFNFL…LGRFALVGEA (144 aa)) is the ZU5 domain. The tract at residues 605 to 623 (SLEYNIRVYCLHDTHDALK) is interaction with DCC. Residues 761–841 (QKIISSLDPP…AGLFTVSEAE (81 aa)) form the Death domain.

This sequence belongs to the unc-5 family. As to quaternary structure, homodimer and homooligomer. Interacts with the cytoplasmic part of DCC. Interacts with MAGED1. Interacts with PRKCABP, possibly mediating some interaction with PKC. Interacts (via extracellular domain) with FLRT2 (via extracellular domain). Interacts (via extracellular domain) with FLRT3 (via extracellular domain). Phosphorylated on cytoplasmic tyrosine residues. Phosphorylated by PKC in vitro. Post-translationally, proteolytically cleaved by caspases during apoptosis. The cleavage does not take place when the receptor is associated with netrin ligand. Its cleavage by caspases is required to induce apoptosis. In terms of processing, the two extracellular TSRs of UNC5A contain WxxWxxWxxC motifs that can be C-mannosylated on all tryptophans. DPY19L1 preferentially mannosylates the first two tryptophans and DPY19L3 prefers the third. C-mannosylation by DPY19L1 is required for transport of UNC5A from the endoplasmic reticulum to the cell surface.

The protein localises to the cell membrane. It localises to the membrane raft. It is found in the cell projection. Its subcellular location is the neuron projection. In terms of biological role, receptor for netrin required for axon guidance. Functions in the netrin signaling pathway and promotes neurite outgrowth in response to NTN1. Mediates axon repulsion of neuronal growth cones in the developing nervous system in response to netrin. Axon repulsion in growth cones may be mediated by its association with DCC that may trigger signaling for repulsion. It also acts as a dependence receptor required for apoptosis induction when not associated with netrin ligand. The sequence is that of Netrin receptor UNC5A (UNC5A) from Homo sapiens (Human).